The chain runs to 400 residues: Gabija anti-defense 2 (400 aa).

Functionally, counteracts the host Gabija antiviral defense system. Probable nucleotidyltransferase. The polypeptide is Gabija anti-defense 2 (Bacillus phage SPbetaL7).